Consider the following 363-residue polypeptide: Chorismate synthase (363 aa).

The NADP(+) site is built by Arg-48 and Arg-54. FMN-binding positions include 125–127 (RSS), 237–238 (NA), Gly-277, 292–296 (KPTSS), and Arg-318.

It belongs to the chorismate synthase family. In terms of assembly, homotetramer. FMNH2 serves as cofactor.

It carries out the reaction 5-O-(1-carboxyvinyl)-3-phosphoshikimate = chorismate + phosphate. It participates in metabolic intermediate biosynthesis; chorismate biosynthesis; chorismate from D-erythrose 4-phosphate and phosphoenolpyruvate: step 7/7. In terms of biological role, catalyzes the anti-1,4-elimination of the C-3 phosphate and the C-6 proR hydrogen from 5-enolpyruvylshikimate-3-phosphate (EPSP) to yield chorismate, which is the branch point compound that serves as the starting substrate for the three terminal pathways of aromatic amino acid biosynthesis. This reaction introduces a second double bond into the aromatic ring system. In Pseudomonas entomophila (strain L48), this protein is Chorismate synthase.